The primary structure comprises 105 residues: Circadian clock oscillator protein KaiB (105 aa).

The protein belongs to the KaiB family. As to quaternary structure, may undergo a major conformational rearrangment; in the free state forms homooligomers. When bound to KaiC switches to a monomeric thioredoxin-fold (KaiB(fs)). The active oscillator complex is probably KaiC(6):KaiB(6).

In terms of biological role, component of the KaiBC clock protein complex, which constitutes the main circadian regulator in cyanobacteria; it may modify the ATPase activity of KaiC. Its function is as follows. May be a metamorphic protein which reversibly switches between an inactive tetrameric fold and a rare, thioredoxin-like monomeric fold (KaiB(fs)). KaiB(fs) binds phospho-KaiC, and perhaps clock output effectors. This chain is Circadian clock oscillator protein KaiB, found in Prochlorococcus marinus (strain MIT 9312).